Reading from the N-terminus, the 474-residue chain is Vitamin D-binding protein (474 aa).

The N-terminal stretch at 1–16 (MKRILVFLLAVAFVHA) is a signal peptide. 3 Albumin domains span residues 17 to 208 (LERG…QLKH), 209 to 393 (FSLL…QLTR), and 394 to 474 (ELSS…TLQS). 2 disulfides stabilise this stretch: Cys29-Cys75 and Cys74-Cys83. Asn86 carries an N-linked (GlcNAc...) asparagine glycan. 12 disulfide bridges follow: Cys96–Cys112, Cys111–Cys122, Cys145–Cys190, Cys189–Cys198, Cys220–Cys266, Cys265–Cys273, Cys285–Cys299, Cys298–Cys310, Cys334–Cys375, Cys374–Cys383, Cys406–Cys452, and Cys451–Cys461. A glycan (N-linked (GlcNAc...) asparagine) is linked at Asn287.

Belongs to the ALB/AFP/VDB family. As to quaternary structure, associates with membrane-bound immunoglobulin on the surface of B-lymphocytes and with IgG Fc receptor on the membranes of T-lymphocytes. Interacts with LRP2; the interaction is required for renal uptake of GC in complex with 25-hydroxyvitamin D3.

Its subcellular location is the secreted. Functionally, involved in vitamin D transport and storage, scavenging of extracellular G-actin, enhancement of the chemotactic activity of C5 alpha for neutrophils in inflammation and macrophage activation. This is Vitamin D-binding protein (GC) from Bos taurus (Bovine).